A 258-amino-acid polypeptide reads, in one-letter code: Ribosomal RNA small subunit methyltransferase J (258 aa).

S-adenosyl-L-methionine is bound by residues 111-112 (RD), 127-128 (ER), and Asp-179.

This sequence belongs to the methyltransferase superfamily. RsmJ family.

It localises to the cytoplasm. The enzyme catalyses guanosine(1516) in 16S rRNA + S-adenosyl-L-methionine = N(2)-methylguanosine(1516) in 16S rRNA + S-adenosyl-L-homocysteine + H(+). Functionally, specifically methylates the guanosine in position 1516 of 16S rRNA. The protein is Ribosomal RNA small subunit methyltransferase J of Alteromonas mediterranea (strain DSM 17117 / CIP 110805 / LMG 28347 / Deep ecotype).